The following is a 258-amino-acid chain: Phosphate import ATP-binding protein PstB (258 aa).

The 242-residue stretch at 12–253 (IQVHNLNFYY…PKMKQTEDYI (242 aa)) folds into the ABC transporter domain. ATP is bound at residue 44 to 51 (GPSGCGKS).

This sequence belongs to the ABC transporter superfamily. Phosphate importer (TC 3.A.1.7) family. As to quaternary structure, the complex is composed of two ATP-binding proteins (PstB), two transmembrane proteins (PstC and PstA) and a solute-binding protein (PstS).

It localises to the cell inner membrane. It catalyses the reaction phosphate(out) + ATP + H2O = ADP + 2 phosphate(in) + H(+). In terms of biological role, part of the ABC transporter complex PstSACB involved in phosphate import. Responsible for energy coupling to the transport system. The protein is Phosphate import ATP-binding protein PstB of Photorhabdus laumondii subsp. laumondii (strain DSM 15139 / CIP 105565 / TT01) (Photorhabdus luminescens subsp. laumondii).